The sequence spans 731 residues: E3 ubiquitin-protein ligase SMURF1 (731 aa).

The C2 domain maps to 1–120; sequence MSNPGTRRNG…TGYQRLDLCK (120 aa). Serine 200 is modified (phosphoserine). The disordered stretch occupies residues 216 to 237; that stretch reads EVRGPLQTPQNRPHGHQSPELP. WW domains lie at 234-267 and 280-313; these read PELPEGYEQRTTVQGQVYFLHTQTGVSTWHDPRI and GPLPPGWEVRSTVSGRIYFVDHNNRTTQFTDPRL. Residues lysine 355 and lysine 357 each participate in a glycyl lysine isopeptide (Lys-Gly) (interchain with G-Cter in ubiquitin) cross-link. The HECT domain occupies 394 to 731; sequence RPKDLKKRLM…VEETCGFAVE (338 aa). Cysteine 699 acts as the Glycyl thioester intermediate in catalysis.

In terms of assembly, interacts with TRAF4. Interacts (via HECT domain) with FBXL15 (via LRR repeats). Interacts with SMAD7 and TGFBR1; SMAD7 recruits SMURF1 to TGFBR1 and regulates TGF-beta receptor degradation. Interacts with MAVS; the interaction is mediated by NDFIP1. Post-translationally, auto-ubiquitinated in presence of NDFIP1. Ubiquitinated by the SCF(FBXL15) complex at Lys-355 and Lys-357, leading to its degradation by the proteasome. Lys-357 is the primary ubiquitination site.

The protein localises to the cytoplasm. Its subcellular location is the cell membrane. It carries out the reaction S-ubiquitinyl-[E2 ubiquitin-conjugating enzyme]-L-cysteine + [acceptor protein]-L-lysine = [E2 ubiquitin-conjugating enzyme]-L-cysteine + N(6)-ubiquitinyl-[acceptor protein]-L-lysine.. Its pathway is protein modification; protein ubiquitination. Its function is as follows. E3 ubiquitin-protein ligase that acts as a negative regulator of BMP signaling pathway. Mediates ubiquitination and degradation of SMAD1 and SMAD5, 2 receptor-regulated SMADs specific for the BMP pathway. Promotes ubiquitination and subsequent proteasomal degradation of TRAF family members and RHOA. Promotes ubiquitination and subsequent proteasomal degradation of MAVS. Acts as an antagonist of TGF-beta signaling by ubiquitinating TGFBR1 and targeting it for degradation. Plays a role in dendrite formation by melanocytes. This is E3 ubiquitin-protein ligase SMURF1 (Smurf1) from Mus musculus (Mouse).